The chain runs to 332 residues: Ubiquinone biosynthesis protein COQ4, mitochondrial (332 aa).

A mitochondrion-targeting transit peptide spans 1 to 24; sequence MLRLGVSRTPINRQFVGYEQRRHF. Positions 210, 211, 214, and 226 each coordinate Zn(2+).

This sequence belongs to the COQ4 family. In terms of assembly, component of a multi-subunit COQ enzyme complex, composed of at least COQ3, COQ4, COQ5, COQ6, COQ7 and COQ9. The cofactor is Zn(2+).

Its subcellular location is the mitochondrion inner membrane. It catalyses the reaction a 4-hydroxy-3-methoxy-5-(all-trans-polyprenyl)benzoate + H(+) = a 2-methoxy-6-(all-trans-polyprenyl)phenol + CO2. It participates in cofactor biosynthesis; ubiquinone biosynthesis. Lyase that catalyzes the C1-decarboxylation of 4-hydroxy-3-methoxy-5-(all-trans-polyprenyl)benzoic acid into 2-methoxy-6-(all-trans-polyprenyl)phenol during ubiquinone biosynthesis. This Zygosaccharomyces rouxii (strain ATCC 2623 / CBS 732 / NBRC 1130 / NCYC 568 / NRRL Y-229) protein is Ubiquinone biosynthesis protein COQ4, mitochondrial.